The chain runs to 269 residues: ParA family protein MG470 (269 aa).

This sequence belongs to the ParA family.

The chain is ParA family protein MG470 from Mycoplasma genitalium (strain ATCC 33530 / DSM 19775 / NCTC 10195 / G37) (Mycoplasmoides genitalium).